A 436-amino-acid chain; its full sequence is Homeobox protein PKNOX1 (436 aa).

A compositionally biased stretch (polar residues) spans 1 to 20 (MMATQTLSIDSYQDGQQMQV). Residues 1-49 (MMATQTLSIDSYQDGQQMQVVTELKTEQDPNCSEPDAEGVSPPPVESQT) are disordered. Residues Ser33 and Ser41 each carry the phosphoserine modification. The MEIS N-terminal domain occupies 80–163 (GSEGTTSASF…MNSETLLSGE (84 aa)). A DNA-binding region (homeobox; TALE-type) is located at residues 259 to 321 (SKNKRGVLPK…NARRRILQPM (63 aa)). The interval 401–436 (AGQSEDESVDSTEEDAGALAPAHISGLVLENSDSLQ) is disordered. Over residues 404–416 (SEDESVDSTEEDA) the composition is skewed to acidic residues.

The protein belongs to the TALE/MEIS homeobox family. As to quaternary structure, interacts with MN1. In terms of tissue distribution, ubiquitous. Isoform 2 is expressed in all examined tissues except in bone marrow.

It is found in the nucleus. Its function is as follows. Activates transcription in the presence of PBX1A and HOXA1. In Homo sapiens (Human), this protein is Homeobox protein PKNOX1.